Reading from the N-terminus, the 512-residue chain is Probable DNA ligase (512 aa).

Glu-208 serves as a coordination point for ATP. Catalysis depends on Lys-210, which acts as the N6-AMP-lysine intermediate. ATP-binding residues include Arg-215, Arg-230, Glu-259, Phe-299, Arg-374, and Lys-380.

This sequence belongs to the ATP-dependent DNA ligase family. Requires Mg(2+) as cofactor.

It carries out the reaction ATP + (deoxyribonucleotide)n-3'-hydroxyl + 5'-phospho-(deoxyribonucleotide)m = (deoxyribonucleotide)n+m + AMP + diphosphate.. In terms of biological role, DNA ligase that seals nicks in double-stranded DNA during DNA replication, DNA recombination and DNA repair. The sequence is that of Probable DNA ligase from Streptomyces avermitilis (strain ATCC 31267 / DSM 46492 / JCM 5070 / NBRC 14893 / NCIMB 12804 / NRRL 8165 / MA-4680).